Reading from the N-terminus, the 166-residue chain is MDKEKFQQKAVKQTKQKKSTSAEFLMVKEYTDATEGAGNPGFNMSSPELPAHQTPQEKVVRHDMLDHTLATHQQKSRLPASAGPKGVTSVLIVLTLAALLIRPGCPEREPGIPLKRACTASVEDLFGARVGGDAAEDLCTHWVQVTHSFVGEGYERMNSLFFGRLR.

Residues 1 to 22 (MDKEKFQQKAVKQTKQKKSTSA) form a disordered region.

In Mus musculus (Mouse), this protein is Orofacial cleft 1 candidate gene 1 protein homolog (Ofcc1).